Reading from the N-terminus, the 2067-residue chain is Nuclear receptor coactivator 6 (2067 aa).

Residues 1–932 are TBP/GTF2A-binding region; sequence MVLDDLPNFE…PPRKKKNCHQ (932 aa). A CREBBP-binding region region spans residues 1 to 1060; sequence MVLDDLPNFE…LPVSQNVHPP (1060 aa). Positions 1-1314 are NCOA1-binding region; it reads MVLDDLPNFE…QAHKLDSVVV (1314 aa). Asymmetric dimethylarginine is present on R95. Disordered stretches follow at residues 181-253 and 293-548; these read AVMT…RQMN and TRPL…PGNS. A compositionally biased stretch (low complexity) spans 293 to 304; that stretch reads TRPLQQHQQQPQ. Composition is skewed to polar residues over residues 338 to 347, 357 to 372, 383 to 405, 421 to 457, 465 to 506, and 526 to 548; these read SLGTMTTNQG, MQAQ…TVQT, GSQQ…QFTA, PLQQ…QQQM, NPLS…QGPQ, and GQAN…PGNS. The segment at 777–931 is NCOA6IP-binding region; sequence VNNSPSQVMG…KPPRKKKNCH (155 aa). S888 carries the post-translational modification Phosphoserine. Positions 891–895 match the LXXLL motif 1 motif; sequence LVNLL. Disordered regions lie at residues 903–1279, 1313–1358, 1424–1481, 1497–1581, and 1769–1822; these read HFGV…QGLN, VVNS…APKL, NIPQ…EENK, QLLD…IPPV, and LNPD…GKGK. Positions 907–916 are enriched in low complexity; it reads NNKQNNTNAN. The span at 917–929 shows a compositional bias: basic residues; sequence KPKKKKPPRKKKN. Over residues 984–996 the composition is skewed to low complexity; sequence QRPLPQMPPQLMQ. Over residues 999-1024 the composition is skewed to pro residues; sequence APPPQPPQQQPQPQLPQQQQPPPPSQ. The span at 1025 to 1044 shows a compositional bias: low complexity; the sequence is PQSQQQQQQQQMMMMLMMQQ. Asymmetric dimethylarginine occurs at positions 1050 and 1061. Residues 1066–1078 are compositionally biased toward polar residues; it reads PDSQRMPVQQSGN. Position 1099 is an asymmetric dimethylarginine (R1099). Residues 1103–1123 show a composition bias toward polar residues; the sequence is SVNTPMGSNSRKMVYQENPQN. Low complexity predominate over residues 1124 to 1137; the sequence is SSSSPLGEMSSLPE. 3 stretches are compositionally biased toward polar residues: residues 1152 to 1165, 1176 to 1194, and 1205 to 1217; these read NMPS…NQLM, LSAT…SLPS, and APTQ…TPNR. The span at 1222–1235 shows a compositional bias: pro residues; that stretch reads PYYPQTPNNRPPST. Residues 1313 to 1324 show a composition bias toward polar residues; the sequence is VVNSGKQSNPGT. A compositionally biased stretch (low complexity) spans 1326–1349; the sequence is KRASPSNSRRSSPGSSRKTTPSPG. The segment covering 1424 to 1435 has biased composition (polar residues); that stretch reads NIPQDSDCQNAQ. The LXXLL motif 2 motif lies at 1495–1499; it reads LSQLL. The span at 1545–1562 shows a compositional bias: low complexity; sequence EPSTSLSSPHSSEPCSTL. Residues 1644 to 2067 are EP300/CRSP3-binding region; that stretch reads SEGQSAAQSN…AVQSKRRKSK (424 aa). The segment covering 1775 to 1805 has biased composition (polar residues); it reads SPQTNTSADQSTLPPSQPTTVVSSLLTNSPG. The span at 1806–1818 shows a compositional bias: low complexity; the sequence is SSANRRSPVSSSK. K1822 and K1825 each carry N6-acetyllysine. 2 disordered regions span residues 1840–1911 and 1957–2067; these read GSLE…LPGG and VGSH…RKSK. Positions 1871–1883 are enriched in polar residues; sequence EQCSTELDSKTPT. A compositionally biased stretch (low complexity) spans 1892–1904; the sequence is MTSSPMAPSSTST. Residues 2005–2014 are compositionally biased toward basic and acidic residues; it reads EPKEIVEKSK. S2022 carries the post-translational modification Phosphoserine.

In terms of assembly, monomer and homodimer. Interacts in vitro with the basal transcription factors GTF2A and TBP, suggesting an autonomous transactivation function. Interacts with NCOA1, CRSP3, RBM14, the histone acetyltransferase proteins EP300 and CREBBP, and with methyltransferase proteins NCOA6IP and PRMT2. Interacts with RBM39. Component of the MLL2/3 complex (also named ASCOM complex), at least composed of KMT2D/MLL2 or KMT2C/MLL3, ASH2L, RBBP5, WDR5, NCOA6, DPY30, KDM6A, PAXIP1/PTIP, PAGR1 and alpha- and beta-tubulin. Interacts with ZNF335; may enhance ligand-dependent transcriptional activation by nuclear hormone receptors. Post-translationally, phosphorylated. As to expression, widely expressed. High expression in testis and weak expression in small intestine.

It is found in the nucleus. Functionally, nuclear receptor coactivator that directly binds nuclear receptors and stimulates the transcriptional activities in a hormone-dependent fashion. Coactivates expression in an agonist- and AF2-dependent manner. Involved in the coactivation of different nuclear receptors, such as for steroids (GR and ERs), retinoids (RARs and RXRs), thyroid hormone (TRs), vitamin D3 (VDR) and prostanoids (PPARs). Probably functions as a general coactivator, rather than just a nuclear receptor coactivator. May also be involved in the coactivation of the NF-kappa-B pathway. May coactivate expression via a remodeling of chromatin and its interaction with histone acetyltransferase proteins. Involved in placental, cardiac, hepatic and embryonic development. In Mus musculus (Mouse), this protein is Nuclear receptor coactivator 6 (Ncoa6).